Reading from the N-terminus, the 225-residue chain is Pyrimidine 5'-nucleotidase YjjG (225 aa).

Aspartate 9 acts as the Nucleophile in catalysis.

It belongs to the HAD-like hydrolase superfamily. YjjG family. Monomer, homodimer and possibly homotetramer in solution. It depends on Mn(2+) as a cofactor. Requires Mg(2+) as cofactor. Co(2+) serves as cofactor.

The protein localises to the cytoplasm. It catalyses the reaction a ribonucleoside 5'-phosphate + H2O = a ribonucleoside + phosphate. The enzyme catalyses a 2'-deoxyribonucleoside 5'-phosphate + H2O = a 2'-deoxyribonucleoside + phosphate. The catalysed reaction is UMP + H2O = uridine + phosphate. It carries out the reaction dUMP + H2O = 2'-deoxyuridine + phosphate. It catalyses the reaction dTMP + H2O = thymidine + phosphate. Its activity is regulated as follows. In contrast to nucleotidases from other families, is not inhibited by ribo- and deoxyribonucleoside di- and triphosphates. Its function is as follows. Nucleotidase that shows high phosphatase activity toward non-canonical pyrimidine nucleotides and three canonical nucleoside 5'-monophosphates (UMP, dUMP, and dTMP), and very low activity against TDP, IMP, UDP, GMP, dGMP, AMP, dAMP, and 6-phosphogluconate. Appears to function as a house-cleaning nucleotidase in vivo, since the general nucleotidase activity of YjjG allows it to protect cells against non-canonical pyrimidine derivatives such as 5-fluoro-2'-deoxyuridine, 5-fluorouridine, 5-fluoroorotate, 5-fluorouracil, and 5-aza-2'-deoxycytidine, and prevents the incorporation of potentially mutagenic nucleotides into DNA. Its dUMP phosphatase activity that catalyzes the hydrolysis of dUMP to deoxyuridine is necessary for thymine utilization via the thymine salvage pathway. Is strictly specific to substrates with 5'-phosphates and shows no activity against nucleoside 2'- or 3'-monophosphates. The sequence is that of Pyrimidine 5'-nucleotidase YjjG (yjjG) from Escherichia coli (strain K12).